Here is a 193-residue protein sequence, read N- to C-terminus: Peptidyl-tRNA hydrolase (193 aa).

Tyr16 lines the tRNA pocket. The active-site Proton acceptor is the His21. 3 residues coordinate tRNA: Phe67, Asn69, and Asn115.

It belongs to the PTH family. As to quaternary structure, monomer.

The protein resides in the cytoplasm. It catalyses the reaction an N-acyl-L-alpha-aminoacyl-tRNA + H2O = an N-acyl-L-amino acid + a tRNA + H(+). Hydrolyzes ribosome-free peptidyl-tRNAs (with 1 or more amino acids incorporated), which drop off the ribosome during protein synthesis, or as a result of ribosome stalling. Its function is as follows. Catalyzes the release of premature peptidyl moieties from peptidyl-tRNA molecules trapped in stalled 50S ribosomal subunits, and thus maintains levels of free tRNAs and 50S ribosomes. This chain is Peptidyl-tRNA hydrolase, found in Baumannia cicadellinicola subsp. Homalodisca coagulata.